Consider the following 344-residue polypeptide: tRNA N6-adenosine threonylcarbamoyltransferase (344 aa).

Fe cation-binding residues include histidine 111 and histidine 115. Residues 134–138, aspartate 167, glycine 180, and asparagine 273 contribute to the substrate site; that span reads LVSGG. Aspartate 301 is a Fe cation binding site.

It belongs to the KAE1 / TsaD family. Requires Fe(2+) as cofactor.

It localises to the cytoplasm. The catalysed reaction is L-threonylcarbamoyladenylate + adenosine(37) in tRNA = N(6)-L-threonylcarbamoyladenosine(37) in tRNA + AMP + H(+). In terms of biological role, required for the formation of a threonylcarbamoyl group on adenosine at position 37 (t(6)A37) in tRNAs that read codons beginning with adenine. Is involved in the transfer of the threonylcarbamoyl moiety of threonylcarbamoyl-AMP (TC-AMP) to the N6 group of A37, together with TsaE and TsaB. TsaD likely plays a direct catalytic role in this reaction. The chain is tRNA N6-adenosine threonylcarbamoyltransferase from Cupriavidus pinatubonensis (strain JMP 134 / LMG 1197) (Cupriavidus necator (strain JMP 134)).